The primary structure comprises 215 residues: Meiotic chromosome segregation protein P8B7.28c (215 aa).

The segment at 159-202 (TINSEYADDVSDNTDEERTESKGQQESNSAEEYDDDDSDEDRME) is disordered. Composition is skewed to acidic residues over residues 164–176 (YADD…DEER) and 187–201 (SAEE…EDRM).

The protein resides in the nucleus. It localises to the nucleolus. Required for meiotic chromosome segregation. This chain is Meiotic chromosome segregation protein P8B7.28c, found in Schizosaccharomyces pombe (strain 972 / ATCC 24843) (Fission yeast).